Consider the following 102-residue polypeptide: Large ribosomal subunit protein uL24 (102 aa).

This sequence belongs to the universal ribosomal protein uL24 family. As to quaternary structure, part of the 50S ribosomal subunit.

One of two assembly initiator proteins, it binds directly to the 5'-end of the 23S rRNA, where it nucleates assembly of the 50S subunit. Functionally, one of the proteins that surrounds the polypeptide exit tunnel on the outside of the subunit. The protein is Large ribosomal subunit protein uL24 of Burkholderia ambifaria (strain ATCC BAA-244 / DSM 16087 / CCUG 44356 / LMG 19182 / AMMD) (Burkholderia cepacia (strain AMMD)).